The chain runs to 399 residues: 3-sulfinopropanoyl-CoA desulfinase (399 aa).

Residues 121-124 (ICIS), S130, and 153-156 (YWIT) each bind FAD. 244-245 (YN) is a substrate binding site. FAD contacts are provided by residues R273, Q340, S344, 367 to 371 (GGTAQ), and Q388.

The protein belongs to the acyl-CoA dehydrogenase family. In terms of assembly, homotrimer or homotetramer. It depends on FAD as a cofactor.

The catalysed reaction is 3-sulfinopropanoyl-CoA + H2O = propanoyl-CoA + sulfite + H(+). Functionally, catalyzes the conversion 3-sulfinopropanoyl-CoA (3SP-CoA) to propanoyl-CoA by abstraction of sulfite. Does not show dehydrogenase activity. This chain is 3-sulfinopropanoyl-CoA desulfinase, found in Variovorax paradoxus.